The chain runs to 409 residues: Multifunctional CCA protein (409 aa).

Positions 8 and 11 each coordinate ATP. Residues Gly8 and Arg11 each contribute to the CTP site. Positions 21 and 23 each coordinate Mg(2+). Arg91, Arg137, and Arg140 together coordinate ATP. CTP contacts are provided by Arg91, Arg137, and Arg140. Residues 228–329 enclose the HD domain; it reads TGVHTLSVLE…LELLQSFDVY (102 aa).

The protein belongs to the tRNA nucleotidyltransferase/poly(A) polymerase family. Bacterial CCA-adding enzyme type 1 subfamily. In terms of assembly, monomer. Can also form homodimers and oligomers. The cofactor is Mg(2+). It depends on Ni(2+) as a cofactor.

The enzyme catalyses a tRNA precursor + 2 CTP + ATP = a tRNA with a 3' CCA end + 3 diphosphate. It catalyses the reaction a tRNA with a 3' CCA end + 2 CTP + ATP = a tRNA with a 3' CCACCA end + 3 diphosphate. Catalyzes the addition and repair of the essential 3'-terminal CCA sequence in tRNAs without using a nucleic acid template. Adds these three nucleotides in the order of C, C, and A to the tRNA nucleotide-73, using CTP and ATP as substrates and producing inorganic pyrophosphate. tRNA 3'-terminal CCA addition is required both for tRNA processing and repair. Also involved in tRNA surveillance by mediating tandem CCA addition to generate a CCACCA at the 3' terminus of unstable tRNAs. While stable tRNAs receive only 3'-terminal CCA, unstable tRNAs are marked with CCACCA and rapidly degraded. The protein is Multifunctional CCA protein of Pseudomonas fluorescens (strain SBW25).